A 237-amino-acid polypeptide reads, in one-letter code: Regulator of G-protein signaling 9-binding protein (237 aa).

Residues 1 to 214 (MAKEECKALL…TGPCDLSKAK (214 aa)) lie on the Cytoplasmic side of the membrane. Coiled-coil stretches lie at residues 29-58 (GSADSQNLREELQKTRQKAQELAVAIRLRL) and 144-169 (VEDLHQLEREILQVGEMIQDMEMKVN). An SNARE-like region spans residues 153–202 (EILQVGEMIQDMEMKVNVPRWTVQARQAAGAELLSSASAGVSSVGGVSVE). Residues 215-234 (AATIFSAVLLAAVALAVCVA) form a helical; Anchor for type IV membrane protein membrane-spanning segment. Over 235 to 237 (KLS) the chain is Extracellular.

The protein belongs to the RGS7BP/RGS9BP family. As to quaternary structure, specifically interacts with isoform RGS9-1 of RGS9. Component of the RGS9-1-Gbeta5 complex composed of RGS9-1, Gbeta5 (GNB5) and RGS9BP. Specifically expressed in the retina. Only present in photoreceptors (at protein level).

The protein resides in the membrane. Regulator of G protein-coupled receptor (GPCR) signaling in phototransduction. Participates in the recovery phase of visual transduction via its interaction with RGS9-1 isoform. Acts as a membrane-anchor that mediates the targeting of RGS9-1 to the photoreceptor outer segment, where phototransduction takes place. Enhances the ability of RGS9-1 to stimulate G protein GTPase activity, allowing the visual signal to be terminated on the physiologically time scale. It also controls the proteolytic stability of RGS9-1, probably by protecting it from degradation. The protein is Regulator of G-protein signaling 9-binding protein (RGS9BP) of Bos taurus (Bovine).